A 435-amino-acid chain; its full sequence is Tol-Pal system protein TolB (435 aa).

The first 20 residues, Met1–Ala20, serve as a signal peptide directing secretion.

It belongs to the TolB family. The Tol-Pal system is composed of five core proteins: the inner membrane proteins TolA, TolQ and TolR, the periplasmic protein TolB and the outer membrane protein Pal. They form a network linking the inner and outer membranes and the peptidoglycan layer.

It is found in the periplasm. Part of the Tol-Pal system, which plays a role in outer membrane invagination during cell division and is important for maintaining outer membrane integrity. This is Tol-Pal system protein TolB from Francisella tularensis subsp. holarctica (strain LVS).